The chain runs to 364 residues: Guanine nucleotide-binding protein alpha-8 subunit (364 aa).

The N-myristoyl glycine moiety is linked to residue Gly2. Cys5 carries S-palmitoyl cysteine lipidation. The G-alpha domain occupies Lys38–Gln364. The G1 motif stretch occupies residues Lys41 to Thr54. Residues Gly46 to Ser53, Leu186 to Thr192, Asp211 to Gln215, Asn280 to Asp283, and Ala336 contribute to the GTP site. Mg(2+) is bound by residues Ser53 and Thr192. The interval Asp184 to Thr192 is G2 motif. Positions Phe207 to Arg216 are G3 motif. The G4 motif stretch occupies residues Ile276–Asp283. Positions Thr334–Thr339 are G5 motif.

Belongs to the G-alpha family. In terms of assembly, g proteins are composed of 3 units; alpha, beta and gamma. The alpha chain contains the guanine nucleotide binding site.

Its function is as follows. Guanine nucleotide-binding proteins (G proteins) are involved as modulators or transducers in various transmembrane signaling systems. This Caenorhabditis elegans protein is Guanine nucleotide-binding protein alpha-8 subunit (gpa-8).